A 36-amino-acid chain; its full sequence is DNA binding protein ORF8 (36 aa).

Belongs to the microviridae J protein family.

It is found in the virion. The protein localises to the host cytoplasm. Functionally, mediates ssDNA packaging into virion, it locates to the internal surface of the capsid. Additionally, plays a role in viral attachment to the host cell. In Chlamydia phage 1 (Bacteriophage Chp1), this protein is DNA binding protein ORF8.